We begin with the raw amino-acid sequence, 307 residues long: Small ribosomal subunit biogenesis GTPase RsgA (307 aa).

Residues Met1–Met20 form a disordered region. The span at Gly10 to Met20 shows a compositional bias: polar residues. One can recognise a CP-type G domain in the interval Arg85–Phe242. Residues Asn135–Asp138 and Gly184–Thr192 each bind GTP. The Zn(2+) site is built by Cys266, Cys271, His273, and Cys279.

Belongs to the TRAFAC class YlqF/YawG GTPase family. RsgA subfamily. In terms of assembly, monomer. Associates with 30S ribosomal subunit, binds 16S rRNA. It depends on Zn(2+) as a cofactor.

It is found in the cytoplasm. One of several proteins that assist in the late maturation steps of the functional core of the 30S ribosomal subunit. Helps release RbfA from mature subunits. May play a role in the assembly of ribosomal proteins into the subunit. Circularly permuted GTPase that catalyzes slow GTP hydrolysis, GTPase activity is stimulated by the 30S ribosomal subunit. The chain is Small ribosomal subunit biogenesis GTPase RsgA from Neisseria meningitidis serogroup C / serotype 2a (strain ATCC 700532 / DSM 15464 / FAM18).